The following is a 159-amino-acid chain: Small ribosomal subunit protein uS17x (159 aa).

The protein belongs to the universal ribosomal protein uS17 family.

It is found in the cytoplasm. The sequence is that of Small ribosomal subunit protein uS17x (RPS11C) from Arabidopsis thaliana (Mouse-ear cress).